The chain runs to 545 residues: Chaperonin GroEL (545 aa).

ATP is bound by residues 30–33 (TLGP), Lys51, 87–91 (DGTTT), Gly415, and Asp495.

Belongs to the chaperonin (HSP60) family. In terms of assembly, forms a cylinder of 14 subunits composed of two heptameric rings stacked back-to-back. Interacts with the co-chaperonin GroES.

It localises to the cytoplasm. The enzyme catalyses ATP + H2O + a folded polypeptide = ADP + phosphate + an unfolded polypeptide.. Together with its co-chaperonin GroES, plays an essential role in assisting protein folding. The GroEL-GroES system forms a nano-cage that allows encapsulation of the non-native substrate proteins and provides a physical environment optimized to promote and accelerate protein folding. The polypeptide is Chaperonin GroEL (Shewanella sp. (strain MR-7)).